A 589-amino-acid chain; its full sequence is MDIGKIDIPESSGVYLMKKNNKVIYVGKAKNLKNRVSSYFNRVHESEKTNELVKNIEDIEFFLTNTEIDALLLENNLIKKYSPKYNILLKDEKTYPFIKISKEDFSSIKIVRTTKALDIKSGEYFGPYPYGAWRLKNILMKLFKIRDCNRDMKKTSPRPCLKYYMKSCTGPCVYKDIKEEYNKDVENLKQVLKGNTSKLINELTALMNKASQDMDFEKSIIYREQIKELKSIASSQIIQYERELDEDIFVFKTILDKAFICVLNMRDGKILGKSSTSIDLKNKITDNIYEAIFMSYYSKHILPKSLVLDAEYENELSVVVKALTIEDSKKKEFHFPKIKSRRKELLDMAYKNLERDIESYFSKKDTIEKGIKDLHDILGLKRFPRKIECFDISNIQGKDAVASMSVSIEGRAARKEYRKFKIRCKDTPDDFSMMREVIERRYSKLPDIEFPDVILIDGGLGQINSAGEVLKRLGKIHLSELLSLAERNEEIYKYGESIPYVLSKDMEALKIFQRVRDEAHRFGITYHRKIRSKRIISSELDKIDGIGEVRRRKLLTKFGSISAIKKASIEELKEIIPEKVALEIKNKIR.

One can recognise a GIY-YIG domain in the interval 10–87 (ESSGVYLMKK…IKKYSPKYNI (78 aa)). Residues 197 to 232 (SKLINELTALMNKASQDMDFEKSIIYREQIKELKSI) form the UVR domain.

It belongs to the UvrC family. Interacts with UvrB in an incision complex.

It localises to the cytoplasm. The UvrABC repair system catalyzes the recognition and processing of DNA lesions. UvrC both incises the 5' and 3' sides of the lesion. The N-terminal half is responsible for the 3' incision and the C-terminal half is responsible for the 5' incision. The chain is UvrABC system protein C from Fusobacterium nucleatum subsp. nucleatum (strain ATCC 25586 / DSM 15643 / BCRC 10681 / CIP 101130 / JCM 8532 / KCTC 2640 / LMG 13131 / VPI 4355).